A 191-amino-acid polypeptide reads, in one-letter code: Ribosome maturation factor RimM (191 aa).

Positions threonine 99–glycine 172 constitute a PRC barrel domain.

This sequence belongs to the RimM family. As to quaternary structure, binds ribosomal protein uS19.

Its subcellular location is the cytoplasm. In terms of biological role, an accessory protein needed during the final step in the assembly of 30S ribosomal subunit, possibly for assembly of the head region. Essential for efficient processing of 16S rRNA. May be needed both before and after RbfA during the maturation of 16S rRNA. It has affinity for free ribosomal 30S subunits but not for 70S ribosomes. This Bartonella bacilliformis (strain ATCC 35685 / KC583 / Herrer 020/F12,63) protein is Ribosome maturation factor RimM.